A 78-amino-acid polypeptide reads, in one-letter code: DNA-directed RNA polymerase subunit omega (78 aa).

It belongs to the RNA polymerase subunit omega family. As to quaternary structure, in cyanobacteria the RNAP catalytic core is composed of 2 alpha, 1 beta, 1 beta', 1 gamma and 1 omega subunit. When a sigma factor is associated with the core the holoenzyme is formed, which can initiate transcription.

It carries out the reaction RNA(n) + a ribonucleoside 5'-triphosphate = RNA(n+1) + diphosphate. Promotes RNA polymerase assembly. Latches the N- and C-terminal regions of the beta' subunit thereby facilitating its interaction with the beta and alpha subunits. This chain is DNA-directed RNA polymerase subunit omega, found in Prochlorococcus marinus (strain AS9601).